The chain runs to 405 residues: Argininosuccinate synthase (405 aa).

11-19 contributes to the ATP binding site; sequence AYSGGLDTS. Y90 is a binding site for L-citrulline. G119 is an ATP binding site. 3 residues coordinate L-aspartate: T121, N125, and D126. N125 lines the L-citrulline pocket. Residues R129, S178, S187, E263, and Y275 each contribute to the L-citrulline site.

This sequence belongs to the argininosuccinate synthase family. Type 1 subfamily. Homotetramer.

The protein resides in the cytoplasm. The enzyme catalyses L-citrulline + L-aspartate + ATP = 2-(N(omega)-L-arginino)succinate + AMP + diphosphate + H(+). Its pathway is amino-acid biosynthesis; L-arginine biosynthesis; L-arginine from L-ornithine and carbamoyl phosphate: step 2/3. This chain is Argininosuccinate synthase, found in Legionella pneumophila subsp. pneumophila (strain Philadelphia 1 / ATCC 33152 / DSM 7513).